A 349-amino-acid chain; its full sequence is Hydroxymethylglutaryl-CoA synthase (349 aa).

(3S)-3-hydroxy-3-methylglutaryl-CoA-binding residues include Asp29 and Ala30. Glu81 acts as the Proton donor/acceptor in catalysis. (3S)-3-hydroxy-3-methylglutaryl-CoA contacts are provided by Cys113 and Thr154. Cys113 functions as the Acyl-thioester intermediate in the catalytic mechanism. Arg202 contributes to the CoA binding site. (3S)-3-hydroxy-3-methylglutaryl-CoA is bound by residues Thr204 and His237. Catalysis depends on His237, which acts as the Proton donor/acceptor. A CoA-binding site is contributed by Lys242. Residues Lys246, Asn269, and Ser299 each contribute to the (3S)-3-hydroxy-3-methylglutaryl-CoA site.

The protein belongs to the thiolase-like superfamily. Archaeal HMG-CoA synthase family. As to quaternary structure, interacts with acetoacetyl-CoA thiolase that catalyzes the precedent step in the pathway and with a DUF35 protein. The acetoacetyl-CoA thiolase/HMG-CoA synthase complex channels the intermediate via a fused CoA-binding site, which allows for efficient coupling of the endergonic thiolase reaction with the exergonic HMGCS reaction.

It catalyses the reaction acetoacetyl-CoA + acetyl-CoA + H2O = (3S)-3-hydroxy-3-methylglutaryl-CoA + CoA + H(+). Its pathway is metabolic intermediate biosynthesis; (R)-mevalonate biosynthesis; (R)-mevalonate from acetyl-CoA: step 2/3. Catalyzes the condensation of acetyl-CoA with acetoacetyl-CoA to form 3-hydroxy-3-methylglutaryl-CoA (HMG-CoA). Functions in the mevalonate (MVA) pathway leading to isopentenyl diphosphate (IPP), a key precursor for the biosynthesis of isoprenoid compounds that are building blocks of archaeal membrane lipids. The polypeptide is Hydroxymethylglutaryl-CoA synthase (Methanosarcina mazei (strain ATCC BAA-159 / DSM 3647 / Goe1 / Go1 / JCM 11833 / OCM 88) (Methanosarcina frisia)).